A 481-amino-acid chain; its full sequence is UDP-N-acetylmuramoyl-L-alanyl-D-glutamate--L-lysine ligase (481 aa).

Serine 42 is a binding site for UDP-N-acetyl-alpha-D-muramoyl-L-alanyl-D-glutamate. 118–124 (GTKGKTT) contacts ATP. UDP-N-acetyl-alpha-D-muramoyl-L-alanyl-D-glutamate contacts are provided by residues 160–161 (TT), serine 187, and arginine 195. At lysine 229 the chain carries N6-carboxylysine. The L-lysine recognition motif motif lies at 404-407 (DDPN).

Belongs to the MurCDEF family. MurE subfamily. In terms of processing, carboxylation is probably crucial for Mg(2+) binding and, consequently, for the gamma-phosphate positioning of ATP.

It is found in the cytoplasm. It carries out the reaction UDP-N-acetyl-alpha-D-muramoyl-L-alanyl-D-glutamate + L-lysine + ATP = UDP-N-acetyl-alpha-D-muramoyl-L-alanyl-gamma-D-glutamyl-L-lysine + ADP + phosphate + H(+). It functions in the pathway cell wall biogenesis; peptidoglycan biosynthesis. Catalyzes the addition of L-lysine to the nucleotide precursor UDP-N-acetylmuramoyl-L-alanyl-D-glutamate (UMAG) in the biosynthesis of bacterial cell-wall peptidoglycan. The polypeptide is UDP-N-acetylmuramoyl-L-alanyl-D-glutamate--L-lysine ligase (Streptococcus sanguinis (strain SK36)).